The chain runs to 227 residues: Isopentenyl-diphosphate Delta-isomerase 1 (227 aa).

Lys-36 contributes to the substrate binding site. Residues His-40 and His-51 each coordinate Mg(2+). The Nudix hydrolase domain maps to 49 to 199; that stretch reads LLHRAFSVFL…EIKITPWFQI (151 aa). Substrate is bound by residues Arg-70 and Lys-74. Residue Cys-86 is part of the active site. Ser-87 contributes to the substrate binding site. 2 residues coordinate Mg(2+): Glu-146 and Glu-148. Residue Glu-148 is part of the active site. The residue at position 176 (Lys-176) is an N6-acetyllysine. The short motif at 225–227 is the Microbody targeting signal element; the sequence is HRM.

It belongs to the IPP isomerase type 1 family. In terms of assembly, monomer. It depends on Mg(2+) as a cofactor.

The protein resides in the peroxisome. The catalysed reaction is isopentenyl diphosphate = dimethylallyl diphosphate. It functions in the pathway isoprenoid biosynthesis; dimethylallyl diphosphate biosynthesis; dimethylallyl diphosphate from isopentenyl diphosphate: step 1/1. In terms of biological role, catalyzes the 1,3-allylic rearrangement of the homoallylic substrate isopentenyl (IPP) to its highly electrophilic allylic isomer, dimethylallyl diphosphate (DMAPP). In Macaca fascicularis (Crab-eating macaque), this protein is Isopentenyl-diphosphate Delta-isomerase 1 (IDI1).